A 185-amino-acid chain; its full sequence is Ribosome-recycling factor (185 aa).

This sequence belongs to the RRF family.

It localises to the cytoplasm. Functionally, responsible for the release of ribosomes from messenger RNA at the termination of protein biosynthesis. May increase the efficiency of translation by recycling ribosomes from one round of translation to another. This chain is Ribosome-recycling factor, found in Heliobacterium modesticaldum (strain ATCC 51547 / Ice1).